The sequence spans 445 residues: Phosphoglucosamine mutase (445 aa).

Ser99 acts as the Phosphoserine intermediate in catalysis. 4 residues coordinate Mg(2+): Ser99, Asp242, Asp244, and Asp246. Ser99 carries the post-translational modification Phosphoserine.

This sequence belongs to the phosphohexose mutase family. The cofactor is Mg(2+). Activated by phosphorylation.

The enzyme catalyses alpha-D-glucosamine 1-phosphate = D-glucosamine 6-phosphate. Catalyzes the conversion of glucosamine-6-phosphate to glucosamine-1-phosphate. The chain is Phosphoglucosamine mutase from Sulfurovum sp. (strain NBC37-1).